The sequence spans 446 residues: Low-affinity gluconate transporter (446 aa).

Residue methionine 1 is a topological domain, cytoplasmic. A helical membrane pass occupies residues 2–22 (TTLTLVLTAVGSVLLLLFLVM). Residues 23–26 (KARM) are Periplasmic-facing. The helical transmembrane segment at 27–47 (HAFLALMVVSMGAGLFSGMPL) threads the bilayer. The Cytoplasmic portion of the chain corresponds to 48–58 (DKIAATMEKGM). Residues 59 to 79 (GGTLGFLAVVVALGAMFGKIL) form a helical membrane-spanning segment. The Periplasmic portion of the chain corresponds to 80–109 (HETGAVDQIAVKMLKSFGHSRAHYAIGLAG). The chain crosses the membrane as a helical span at residues 110-130 (LVCALPLFFEVAIVLLISVAF). Topologically, residues 131–142 (SMARHTGTNLVK) are cytoplasmic. Residues 143–163 (LVIPLFAGVAAAAAFLVPGPA) traverse the membrane as a helical segment. Residues 164 to 176 (PMLLASQMNADFG) are Periplasmic-facing. A helical transmembrane segment spans residues 177 to 197 (WMILIGLCAAIPGMIIAGPLW). The Cytoplasmic segment spans residues 198-225 (GNFISRYVELHIPDDISEPHLGEGKMPS). A helical membrane pass occupies residues 226–246 (FGFSLSLILLPLVLVGLKTIA). At 247-261 (ARFVPEGSTAYEWFE) the chain is on the periplasmic side. A helical membrane pass occupies residues 262–282 (FIGHPFTAILVACLVAIYGLA). Residues 283–294 (MRQGMPKDKVME) are Cytoplasmic-facing. Residues 295–315 (ICGHALQPAGIILLVIGAGGV) traverse the membrane as a helical segment. Topologically, residues 316-330 (FKQVLVDSGVGPALG) are periplasmic. The helical transmembrane segment at 331–351 (EALTGMGLPIAITCFVLAAAV) threads the bilayer. Arginine 352 is a topological domain (cytoplasmic). A helical transmembrane segment spans residues 353–373 (IIQGSATVACLTAVGLVMPVI). Over 374–387 (EQLNYSGAQMAALS) the chain is Periplasmic. A helical membrane pass occupies residues 388–408 (ICIAGGSIVVSHVNDAGFWLF). The Cytoplasmic portion of the chain corresponds to 409 to 424 (GKFTGATEAETLKTWT). The helical transmembrane segment at 425 to 445 (MMETILGTVGAIVGMIAFQLL) threads the bilayer. Position 446 (serine 446) is a topological domain, periplasmic.

Belongs to the GntP permease family.

Its subcellular location is the cell inner membrane. Part of the gluconate utilization system Gnt-I; low-affinity intake of gluconate. The chain is Low-affinity gluconate transporter (gntU) from Escherichia coli O157:H7.